The primary structure comprises 336 residues: NADH-quinone oxidoreductase subunit H (336 aa).

A run of 8 helical transmembrane segments spans residues 4–24 (YILW…LVVA), 75–95 (YLFF…WAVI), 108–128 (LGLL…VIAG), 154–174 (MGFA…TGII), 181–201 (IWHW…IAGI), 233–253 (LFFL…SIMF), 272–292 (FVPG…MFLW), and 308–328 (LGWK…ACMV).

Belongs to the complex I subunit 1 family. In terms of assembly, NDH-1 is composed of 14 different subunits. Subunits NuoA, H, J, K, L, M, N constitute the membrane sector of the complex.

Its subcellular location is the cell inner membrane. It catalyses the reaction a quinone + NADH + 5 H(+)(in) = a quinol + NAD(+) + 4 H(+)(out). Its function is as follows. NDH-1 shuttles electrons from NADH, via FMN and iron-sulfur (Fe-S) centers, to quinones in the respiratory chain. The immediate electron acceptor for the enzyme in this species is believed to be ubiquinone. Couples the redox reaction to proton translocation (for every two electrons transferred, four hydrogen ions are translocated across the cytoplasmic membrane), and thus conserves the redox energy in a proton gradient. This subunit may bind ubiquinone. The protein is NADH-quinone oxidoreductase subunit H of Francisella tularensis subsp. tularensis (strain FSC 198).